The following is a 276-amino-acid chain: Short-chain dehydrogenase anuF (276 aa).

The NADP(+) site is built by Ile18, Asp68, Lys130, Tyr176, Lys180, Val209, and Thr211. Residue Tyr176 is the Proton acceptor of the active site. Catalysis depends on Tyr176, which acts as the Proton donor. The active-site Lowers pKa of active site Tyr is Lys180.

Belongs to the short-chain dehydrogenases/reductases (SDR) family.

The catalysed reaction is (2R,9S)-annullatin H + A = (2R)-annullatin F + AH2. Cytochrome P450 monooxygenase; part of the gene cluster that mediates the biosynthesis of annullatin D, an alkylated aromatic polyketide with a fused dihydrobenzofuran lactone ring system that exhibits potent agonistic activities toward the cannabinoid receptors. Within the pathway, anuF is involved in the formation of (2R)-annullatin F from the diastereomer of (2S,9S)-annullatin H (compound 12). The annullatin backbone 2-hydroxymethyl-3-pentylphenol is assembled from one acetyl-CoA starter unit and 5 malonyl-CoA elongation units by cooperation of the highly reducing polyketide synthase anuA, the short-chain dehydrogenase anuB and the oxidoreductase anuC, before being hydroxylated at the C-5 alkyl chain by the cytochrome P450 monooxygenase anuE to form (8S)-annullatin E. The prenyltransferase anuH subsequently installs one isoprenyl group at the benzene ring to form (8S)-annullatin J. Enzymatic or nonenzymatic dihydro-benzofuran ring formation between the prenyl and the phenolic hydroxyl groups in (8S)-annullatin J results in two diastereomers (2S,9S)-annullatin H and compound 12. The intermediate (2S,9S)-annullatin H is then converted to (2S,9S)-annullatin D by the FAD-linked oxidoreductase anuG-catalyzed five-member lactone ring formation. The isomer 12 acts as a substrate for the short-chain dehydrogenase anuF and is oxidized to (2R)-annullatin F, which is subsequently acetylated by an acetyltransferase leading to (2R)-annullatin G formation. The remaining enzymes identified within the cluster, anuD, anuI and anuJ, seem not to be involved in annullatin biosynthesis. The sequence is that of Short-chain dehydrogenase anuF from Penicillium roqueforti (strain FM164).